The following is an 820-amino-acid chain: DNA mismatch repair protein MutS (820 aa).

615–622 (GPNMAGKS) provides a ligand contact to ATP.

This sequence belongs to the DNA mismatch repair MutS family.

This protein is involved in the repair of mismatches in DNA. It is possible that it carries out the mismatch recognition step. This protein has a weak ATPase activity. This is DNA mismatch repair protein MutS from Anaplasma phagocytophilum (strain HZ).